The chain runs to 49 residues: Large ribosomal subunit protein bL33A (49 aa).

Belongs to the bacterial ribosomal protein bL33 family.

The chain is Large ribosomal subunit protein bL33A from Lactobacillus johnsonii (strain CNCM I-12250 / La1 / NCC 533).